Here is a 1172-residue protein sequence, read N- to C-terminus: DNA-directed RNA polymerase subunit beta (1172 aa).

Belongs to the RNA polymerase beta chain family. As to quaternary structure, the RNAP catalytic core consists of 2 alpha, 1 beta, 1 beta' and 1 omega subunit. When a sigma factor is associated with the core the holoenzyme is formed, which can initiate transcription.

The enzyme catalyses RNA(n) + a ribonucleoside 5'-triphosphate = RNA(n+1) + diphosphate. DNA-dependent RNA polymerase catalyzes the transcription of DNA into RNA using the four ribonucleoside triphosphates as substrates. The chain is DNA-directed RNA polymerase subunit beta from Thermosipho melanesiensis (strain DSM 12029 / CIP 104789 / BI429).